We begin with the raw amino-acid sequence, 267 residues long: MLLAIDVRNTHTTVGLISGSGDHAKVVQQWRIRTESEATADELALTIDGLIGEDSERLTGAVGLSTVPSVLHEVRLMLEQYWPSVPHVMIEPGVRTGIPLLVDNPKEVGADRIVNCLAAYHRFGTAAIVVDFGSSICVDVVSAKGEFLGGAIAPGVQVSSDAAAARSAALRRVELTRPRSVIGKNTVECMQSGALFGFAGLVDGLVNRIREDVAGFSGTDVAVVATGHTAPLVLPDVHTVAHYDRHLTLDGLRLVFERNRDGQRGRR.

6 to 13 is a binding site for ATP; the sequence is DVRNTHTT. A substrate-binding site is contributed by 109 to 112; it reads GADR. Asp111 functions as the Proton acceptor in the catalytic mechanism. Residue Asp131 participates in K(+) binding. ATP is bound at residue Ser134. Thr186 is a binding site for substrate.

It belongs to the type III pantothenate kinase family. In terms of assembly, homodimer. NH4(+) is required as a cofactor. It depends on K(+) as a cofactor.

Its subcellular location is the cytoplasm. It catalyses the reaction (R)-pantothenate + ATP = (R)-4'-phosphopantothenate + ADP + H(+). The protein operates within cofactor biosynthesis; coenzyme A biosynthesis; CoA from (R)-pantothenate: step 1/5. In terms of biological role, catalyzes the phosphorylation of pantothenate (Pan), the first step in CoA biosynthesis. The polypeptide is Type III pantothenate kinase (Mycobacterium sp. (strain JLS)).